The sequence spans 319 residues: Thioredoxin reductase (319 aa).

36 to 48 (EGFMAGGVAAGGQ) lines the FAD pocket. C144 and C147 form a disulfide bridge. 289 to 298 (DVQDKVYRQA) serves as a coordination point for FAD.

The protein belongs to the class-II pyridine nucleotide-disulfide oxidoreductase family. Homodimer. Requires FAD as cofactor.

It catalyses the reaction [thioredoxin]-dithiol + NADP(+) = [thioredoxin]-disulfide + NADPH + H(+). The polypeptide is Thioredoxin reductase (trrA) (Dictyostelium discoideum (Social amoeba)).